Consider the following 383-residue polypeptide: tRNA(Met) cytidine acetate ligase (383 aa).

ATP contacts are provided by residues 7–20 (ISEY…HLYQ), glycine 102, asparagine 160, and 181–182 (RI).

This sequence belongs to the TmcAL family.

The protein localises to the cytoplasm. The enzyme catalyses cytidine(34) in elongator tRNA(Met) + acetate + ATP = N(4)-acetylcytidine(34) in elongator tRNA(Met) + AMP + diphosphate. In terms of biological role, catalyzes the formation of N(4)-acetylcytidine (ac(4)C) at the wobble position of elongator tRNA(Met), using acetate and ATP as substrates. First activates an acetate ion to form acetyladenylate (Ac-AMP) and then transfers the acetyl group to tRNA to form ac(4)C34. This chain is tRNA(Met) cytidine acetate ligase, found in Exiguobacterium sibiricum (strain DSM 17290 / CCUG 55495 / CIP 109462 / JCM 13490 / 255-15).